The primary structure comprises 377 residues: Histidinol-phosphate aminotransferase (377 aa).

N6-(pyridoxal phosphate)lysine is present on K230.

It belongs to the class-II pyridoxal-phosphate-dependent aminotransferase family. Histidinol-phosphate aminotransferase subfamily. As to quaternary structure, homodimer. Pyridoxal 5'-phosphate is required as a cofactor.

It catalyses the reaction L-histidinol phosphate + 2-oxoglutarate = 3-(imidazol-4-yl)-2-oxopropyl phosphate + L-glutamate. It participates in amino-acid biosynthesis; L-histidine biosynthesis; L-histidine from 5-phospho-alpha-D-ribose 1-diphosphate: step 7/9. This is Histidinol-phosphate aminotransferase from Mycobacterium leprae (strain Br4923).